A 1377-amino-acid polypeptide reads, in one-letter code: DNA-directed RNA polymerase subunit beta (1377 aa).

The protein belongs to the RNA polymerase beta chain family. As to quaternary structure, the RNAP catalytic core consists of 2 alpha, 1 beta, 1 beta' and 1 omega subunit. When a sigma factor is associated with the core the holoenzyme is formed, which can initiate transcription.

It catalyses the reaction RNA(n) + a ribonucleoside 5'-triphosphate = RNA(n+1) + diphosphate. Its function is as follows. DNA-dependent RNA polymerase catalyzes the transcription of DNA into RNA using the four ribonucleoside triphosphates as substrates. In Brucella canis (strain ATCC 23365 / NCTC 10854 / RM-666), this protein is DNA-directed RNA polymerase subunit beta.